Consider the following 327-residue polypeptide: Urokinase plasminogen activator surface receptor (327 aa).

Positions 1–23 (MGLPRRLLLLLLLATTCVPASQG) are cleaved as a signal peptide. UPAR/Ly6 domains are found at residues 24 to 117 (LQCM…GRYL), 117 to 212 (LECA…PPNG), and 213 to 298 (FQCY…SPTG). Disulfide bonds link cysteine 26-cysteine 47, cysteine 29-cysteine 35, and cysteine 40-cysteine 68. N-linked (GlcNAc...) asparagine glycosylation is present at asparagine 32. An N-linked (GlcNAc...) asparagine glycan is attached at asparagine 75. 11 disulfide bridges follow: cysteine 94–cysteine 99, cysteine 119–cysteine 146, cysteine 122–cysteine 129, cysteine 139–cysteine 168, cysteine 174–cysteine 191, cysteine 192–cysteine 197, cysteine 215–cysteine 243, cysteine 218–cysteine 226, cysteine 236–cysteine 262, cysteine 268–cysteine 287, and cysteine 288–cysteine 293. Asparagine 183, asparagine 193, asparagine 221, asparagine 254, and asparagine 282 each carry an N-linked (GlcNAc...) asparagine glycan. Glycine 298 carries the GPI-anchor amidated glycine lipid modification. Residues 299–327 (GAPRPGPAQLSLIASLLLTLGLWGVLLWT) constitute a propeptide, removed in mature form.

In terms of assembly, monomer. Interacts (via the UPAR/Ly6 domains) with SRPX2. Interacts with MRC2. Interacts with SORL1 (via N-terminal ectodomain); this interaction decreases PLAUR internalization. The ternary complex composed of PLAUR-PLAU-SERPINE1 also interacts with SORL1. Interacts with CD82; this interaction prevents PLAUR from binding to its high affinity ligand PLAU. In terms of tissue distribution, expressed in angiogenic endothelial cells (at protein level).

It localises to the cell membrane. The protein localises to the secreted. Functionally, acts as a receptor for urokinase plasminogen activator. Plays a role in localizing and promoting plasmin formation. Mediates the proteolysis-independent signal transduction activation effects of U-PA. This chain is Urokinase plasminogen activator surface receptor (Plaur), found in Mus musculus (Mouse).